The primary structure comprises 207 residues: ATP-dependent Clp protease proteolytic subunit 2 (207 aa).

The Nucleophile role is filled by serine 102. Residue histidine 127 is part of the active site.

Belongs to the peptidase S14 family. In terms of assembly, fourteen ClpP subunits assemble into 2 heptameric rings which stack back to back to give a disk-like structure with a central cavity, resembling the structure of eukaryotic proteasomes.

The protein resides in the cytoplasm. It catalyses the reaction Hydrolysis of proteins to small peptides in the presence of ATP and magnesium. alpha-casein is the usual test substrate. In the absence of ATP, only oligopeptides shorter than five residues are hydrolyzed (such as succinyl-Leu-Tyr-|-NHMec, and Leu-Tyr-Leu-|-Tyr-Trp, in which cleavage of the -Tyr-|-Leu- and -Tyr-|-Trp bonds also occurs).. In terms of biological role, cleaves peptides in various proteins in a process that requires ATP hydrolysis. Has a chymotrypsin-like activity. Plays a major role in the degradation of misfolded proteins. This chain is ATP-dependent Clp protease proteolytic subunit 2, found in Bifidobacterium longum (strain NCC 2705).